A 319-amino-acid chain; its full sequence is Meiotic drive suppressor wtf16 (319 aa).

Disordered regions lie at residues 1–22 (MKNN…KTGH) and 35–68 (DSEE…RSTD). The next 6 helical transmembrane spans lie at 73-93 (FLIK…LAIC), 110-130 (WTLF…LTYF), 153-173 (VVII…CIKF), 187-207 (CSIS…FWTL), 215-235 (FQVL…MYLF), and 241-261 (ATGY…FFFY).

Belongs to the WTF family. In terms of assembly, homomer. Interacts with other proteins that exhibit high sequence similarity.

It localises to the spore membrane. Its subcellular location is the vacuole membrane. Its function is as follows. Acts as a suppressor component of the dual wtf meiotic drive system, and can suppress but not confer meiotic drive by compatible poisons. Wtf meiotic drive systems promote unequal transmission of alleles from the parental zygote to progeny spores by encoding a poison and an antidote from the same locus; the poison is trans-acting and forms toxic aggregates in all spores within an ascus, wherease the antidote is spore-specific and targets aggregates for degradation by the vacuole. Meiotic drive by wtf systems therefore lead to poisoning of all progeny that do not inherit the dual poison/antidote allele, or express a compatible antidote. The polypeptide is Meiotic drive suppressor wtf16 (Schizosaccharomyces pombe (strain 972 / ATCC 24843) (Fission yeast)).